Consider the following 94-residue polypeptide: Preprofallaxidin-9 (94 aa).

The signal sequence occupies residues 1 to 22 (MASLKKSLFLVLFLGLVSLSIC). Residues 23 to 46 (EEEKRENEEDAEDENHEEESEEKR) constitute a propeptide that is removed on maturation. A disordered region spans residues 27 to 46 (RENEEDAEDENHEEESEEKR). The segment covering 30-42 (EEDAEDENHEEES) has biased composition (acidic residues). A Leucine amide modification is found at Leu62. Positions 66–70 (SEEKR) are excised as a propeptide. Position 75 is a methionine amide (Met75). A propeptide spanning residues 79-83 (SEEKR) is cleaved from the precursor. Met88 carries the post-translational modification Methionine amide. The propeptide occupies 92–94 (SEE).

The protein belongs to the frog skin active peptide (FSAP) family. Brevinin subfamily. As to expression, expressed by the skin glands.

The protein localises to the secreted. Its function is as follows. Fallaxidin-1.3 shows no antibacterial activity against Gram-positive or Gram-negative bacteria. Does not inhibit the formation of NO by neuronal nitric oxide synthase. Has no effect on splenocyte proliferation or smooth muscle contraction. Functionally, fallaxidin-3.2 shows antibacterial activity against the Gram-positive bacteria E.faecalis (MIC=100 uM) and L.lactis (MIC=500 uM). No antibacterial activity against the Gram-positive bacteria B.cereus, L.innocua, M.luteus, S.epidermidis, S.uberis and S.aureus, or the Gram-negative bacteria E.cloacae and E.coli. The sequence is that of Preprofallaxidin-9 from Litoria fallax (Eastern dwarf tree frog).